Consider the following 305-residue polypeptide: Ribonucleoside-diphosphate reductase small subunit (305 aa).

E64, E94, and H97 together coordinate Fe cation. Y101 is a catalytic residue. A helical membrane pass occupies residues I150–L170. Positions 157, 191, and 194 each coordinate Fe cation.

This sequence belongs to the ribonucleoside diphosphate reductase small chain family. Heterotetramer composed of a homodimer of the large subunit (R1) and a homodimer of the small subunit (R2). Larger multisubunit protein complex are also active, composed of (R1)n(R2)n. Fe cation is required as a cofactor.

The protein localises to the host membrane. The enzyme catalyses a 2'-deoxyribonucleoside 5'-diphosphate + [thioredoxin]-disulfide + H2O = a ribonucleoside 5'-diphosphate + [thioredoxin]-dithiol. Ribonucleoside-diphosphate reductase holoenzyme provides the precursors necessary for viral DNA synthesis. Allows virus growth in non-dividing cells, as well as reactivation from latency in infected hosts. Catalyzes the biosynthesis of deoxyribonucleotides from the corresponding ribonucleotides. This chain is Ribonucleoside-diphosphate reductase small subunit, found in Homo sapiens (Human).